The chain runs to 73 residues: Putative membrane protein insertion efficiency factor (73 aa).

Belongs to the UPF0161 family.

The protein localises to the cell inner membrane. Its function is as follows. Could be involved in insertion of integral membrane proteins into the membrane. The protein is Putative membrane protein insertion efficiency factor of Treponema denticola (strain ATCC 35405 / DSM 14222 / CIP 103919 / JCM 8153 / KCTC 15104).